The sequence spans 320 residues: MIFSTLEHILTHISFSVVSIVITIHFLTLFLLVDEVVGLYDSSEKGMIVTFFCITGLLVTRWIYSGHFPLSDLYESLIFLSWGFSLIHMVSYLKFKKRKNNLSAITAPRAIFTQGFATSGLLTKMHQSAILAPALQSQWLMMHVSMMVLGYAALLCGSLLSVALLVITFRKAIKIIGENNNFSFSFGKIQYMNERSNVLLNTYFLSSKNYYRYQLTQQLDRWSYRIISLGFIFLTIGILSGAVWANEAWGSYWNWDPKETWAFITWTVFAIYFHTRTNTNLEGVNSALVASMGFLIIWICYFGVNLLGIGLHSYGSFTLN.

Transmembrane regions (helical) follow at residues 13–33 (ISFS…FLLV), 46–66 (GMIV…IYSG), 73–93 (LYES…VSYL), 147–167 (MVLG…LLVI), 226–246 (IISL…VWAN), 259–274 (ETWA…IYFH), and 289–309 (VASM…LLGI).

This sequence belongs to the CcmF/CycK/Ccl1/NrfE/CcsA family. In terms of assembly, may interact with Ccs1.

Its subcellular location is the plastid. The protein localises to the chloroplast thylakoid membrane. Functionally, required during biogenesis of c-type cytochromes (cytochrome c6 and cytochrome f) at the step of heme attachment. This is Cytochrome c biogenesis protein CcsA from Gossypium barbadense (Sea Island cotton).